The sequence spans 137 residues: Proofreading thioesterase EntH (137 aa).

Glutamate 63 serves as the catalytic Nucleophile or proton acceptor.

This sequence belongs to the thioesterase PaaI family. As to quaternary structure, homotetramer. Dimer of dimers. Interacts specifically with the aryl carrier protein (ArCP) domain of EntB.

Its subcellular location is the cytoplasm. It participates in siderophore biosynthesis; enterobactin biosynthesis. Its function is as follows. Required for optimal enterobactin synthesis. Acts as a proofreading enzyme that prevents EntB misacylation by hydrolyzing the thioester bound existing between EntB and wrongly charged molecules. This chain is Proofreading thioesterase EntH, found in Salmonella paratyphi A (strain AKU_12601).